The chain runs to 457 residues: Cytochrome b-c1 complex subunit 1, mitochondrial (457 aa).

The transit peptide at 1 to 26 directs the protein to the mitochondrion; that stretch reads MLRTVTSKTVSNQFKRSLATAVATPK.

It belongs to the peptidase M16 family. UQCRC1/QCR1 subfamily. As to quaternary structure, component of the ubiquinol-cytochrome c oxidoreductase (cytochrome b-c1 complex, complex III, CIII), a multisubunit enzyme composed of 10 subunits. The complex is composed of 3 respiratory subunits cytochrome b (COB), cytochrome c1 (CYT1) and Rieske protein (RIP1), 2 core protein subunits COR1 and QCR2, and 5 low-molecular weight protein subunits QCR6, QCR7, QCR8, QCR9 and QCR10. The complex exists as an obligatory dimer and forms supercomplexes (SCs) in the inner mitochondrial membrane with a monomer or a dimer of cytochrome c oxidase (complex IV, CIV), resulting in 2 different assemblies (supercomplexes III(2)IV and III(2)IV(2)). COR1 interacts with COX5A at the CIII-CIV interface.

The protein localises to the mitochondrion inner membrane. In terms of biological role, component of the ubiquinol-cytochrome c oxidoreductase, a multisubunit transmembrane complex that is part of the mitochondrial electron transport chain which drives oxidative phosphorylation. The respiratory chain contains 3 multisubunit complexes succinate dehydrogenase (complex II, CII), ubiquinol-cytochrome c oxidoreductase (cytochrome b-c1 complex, complex III, CIII) and cytochrome c oxidase (complex IV, CIV), that cooperate to transfer electrons derived from NADH and succinate to molecular oxygen, creating an electrochemical gradient over the inner membrane that drives transmembrane transport and the ATP synthase. The cytochrome b-c1 complex catalyzes electron transfer from ubiquinol to cytochrome c, linking this redox reaction to translocation of protons across the mitochondrial inner membrane, with protons being carried across the membrane as hydrogens on the quinol. In the process called Q cycle, 2 protons are consumed from the matrix, 4 protons are released into the intermembrane space and 2 electrons are passed to cytochrome c. The protein is Cytochrome b-c1 complex subunit 1, mitochondrial (COR1) of Saccharomyces cerevisiae (strain ATCC 204508 / S288c) (Baker's yeast).